The following is a 224-amino-acid chain: Adenosylcobinamide-GDP ribazoletransferase (224 aa).

Transmembrane regions (helical) follow at residues 21-41 (LSFK…AAIP), 44-64 (LLYL…ATGL), 97-117 (GGIF…HSPL), and 156-176 (WPAA…TTAV).

It belongs to the CobS family. Mg(2+) serves as cofactor.

The protein localises to the cell membrane. It carries out the reaction alpha-ribazole + adenosylcob(III)inamide-GDP = adenosylcob(III)alamin + GMP + H(+). The enzyme catalyses alpha-ribazole 5'-phosphate + adenosylcob(III)inamide-GDP = adenosylcob(III)alamin 5'-phosphate + GMP + H(+). The protein operates within cofactor biosynthesis; adenosylcobalamin biosynthesis; adenosylcobalamin from cob(II)yrinate a,c-diamide: step 7/7. Joins adenosylcobinamide-GDP and alpha-ribazole to generate adenosylcobalamin (Ado-cobalamin). Also synthesizes adenosylcobalamin 5'-phosphate from adenosylcobinamide-GDP and alpha-ribazole 5'-phosphate. In Pyrobaculum aerophilum (strain ATCC 51768 / DSM 7523 / JCM 9630 / CIP 104966 / NBRC 100827 / IM2), this protein is Adenosylcobinamide-GDP ribazoletransferase.